A 264-amino-acid polypeptide reads, in one-letter code: ATP synthase subunit a (264 aa).

A run of 5 helical transmembrane segments spans residues Leu39–Val59, Val97–Val117, Thr139–Tyr159, Leu205–Trp225, and Leu239–Leu259.

It belongs to the ATPase A chain family. F-type ATPases have 2 components, CF(1) - the catalytic core - and CF(0) - the membrane proton channel. CF(1) has five subunits: alpha(3), beta(3), gamma(1), delta(1), epsilon(1). CF(0) has three main subunits: a(1), b(2) and c(9-12). The alpha and beta chains form an alternating ring which encloses part of the gamma chain. CF(1) is attached to CF(0) by a central stalk formed by the gamma and epsilon chains, while a peripheral stalk is formed by the delta and b chains.

Its subcellular location is the cell inner membrane. In terms of biological role, key component of the proton channel; it plays a direct role in the translocation of protons across the membrane. The polypeptide is ATP synthase subunit a (Coxiella burnetii (strain CbuK_Q154) (Coxiella burnetii (strain Q154))).